A 191-amino-acid chain; its full sequence is ATP synthase subunit delta (191 aa).

Belongs to the ATPase delta chain family. F-type ATPases have 2 components, F(1) - the catalytic core - and F(0) - the membrane proton channel. F(1) has five subunits: alpha(3), beta(3), gamma(1), delta(1), epsilon(1). F(0) has three main subunits: a(1), b(2) and c(10-14). The alpha and beta chains form an alternating ring which encloses part of the gamma chain. F(1) is attached to F(0) by a central stalk formed by the gamma and epsilon chains, while a peripheral stalk is formed by the delta and b chains.

The protein resides in the cell inner membrane. Functionally, f(1)F(0) ATP synthase produces ATP from ADP in the presence of a proton or sodium gradient. F-type ATPases consist of two structural domains, F(1) containing the extramembraneous catalytic core and F(0) containing the membrane proton channel, linked together by a central stalk and a peripheral stalk. During catalysis, ATP synthesis in the catalytic domain of F(1) is coupled via a rotary mechanism of the central stalk subunits to proton translocation. This protein is part of the stalk that links CF(0) to CF(1). It either transmits conformational changes from CF(0) to CF(1) or is implicated in proton conduction. This is ATP synthase subunit delta from Halothermothrix orenii (strain H 168 / OCM 544 / DSM 9562).